We begin with the raw amino-acid sequence, 154 residues long: Protein phosphatase 1 regulatory subunit 27 (154 aa).

2 ANK repeats span residues S63–Q92 and T96–A125.

In terms of assembly, interacts with DYSF and PPP1CA.

Inhibits phosphatase activity of protein phosphatase 1 (PP1) complexes. The protein is Protein phosphatase 1 regulatory subunit 27 (Ppp1r27) of Mus musculus (Mouse).